A 340-amino-acid chain; its full sequence is Sodium/bile acid cotransporter 7 (340 aa).

Topologically, residues 1 to 10 (MRLLERARKE) are cytoplasmic. Residues 11–31 (WFMVGIVVAIGAAKLEPSVGV) traverse the membrane as a helical segment. The Extracellular segment spans residues 32-37 (NGGPLK). Residues 38–58 (PEITVSYIAVATIFFNSGLSL) form a helical membrane-spanning segment. Over 59-71 (KTEELTSALVHLR) the chain is Cytoplasmic. Residues 72-92 (LHLFIQIFTLAFFPAAIWLFL) form a helical membrane-spanning segment. Residues 93–116 (QLLSVTSINEWLLKGLQTVGCMPP) are Extracellular-facing. A helical transmembrane segment spans residues 117 to 137 (PVSSAVILTKAVGGNEAAAIF). A topological domain (cytoplasmic) is located at residue Asn138. The chain crosses the membrane as a helical span at residues 139–159 (SAFGSFLGIVVTPVLLLLFLG). At 160–163 (SSSS) the chain is on the extracellular side. A helical membrane pass occupies residues 164 to 184 (VPFTSIFSQLFMTVVVPLVIG). Residues 185-201 (QIVRRYIKDWLERKKPP) lie on the Cytoplasmic side of the membrane. A helical transmembrane segment spans residues 202-222 (FGVVSSSVLLMIIYTTFCDTF). At 223–234 (SNPNIDLDKFSL) the chain is on the extracellular side. The chain crosses the membrane as a helical span at residues 235-255 (ILILFIIVSVQLSFMLLTFIF). The Cytoplasmic portion of the chain corresponds to 256 to 270 (STRNNSGFTPADTVA). A helical transmembrane segment spans residues 271 to 291 (IIFCSTHKSLTLGIPMLKIVF). The Extracellular segment spans residues 292 to 298 (AGHEHLS). Residues 299–319 (LISVPLLIYHPAQILLGSVLV) form a helical membrane-spanning segment. Over 320 to 340 (PTIKSWMVSRQKGVKLTRPTV) the chain is Cytoplasmic.

The protein belongs to the bile acid:sodium symporter (BASS) (TC 2.A.28) family. As to expression, expressed in heart, brain, colon, lung, liver, adrenal gland, stomach and ovary. Also expressed weakly in small intestine. Expressed in skeletal tissues.

Its subcellular location is the cell membrane. It is found in the endoplasmic reticulum membrane. The protein resides in the golgi apparatus membrane. Its function is as follows. Involved in teeth and skeletal development. Has an essential role in the biosynthesis and trafficking of glycosaminoglycans and glycoproteins to produce a proper functioning extracellular matrix. Required for extracellular matrix mineralization. Also involved in the regulation of cellular calcium homeostasis. Does not show transport activity towards bile acids or steroid sulfates (including taurocholate, cholate, chenodeoxycholate, estrone-3-sulfate, dehydroepiandrosterone sulfate (DHEAS) and pregnenolone sulfate). The chain is Sodium/bile acid cotransporter 7 (Slc10a7) from Mus musculus (Mouse).